The chain runs to 427 residues: Histidinol dehydrogenase (427 aa).

Residues Tyr-127, Gln-185, and Asn-208 each contribute to the NAD(+) site. The substrate site is built by Ser-232, Gln-254, and His-257. 2 residues coordinate Zn(2+): Gln-254 and His-257. Catalysis depends on proton acceptor residues Glu-321 and His-322. 4 residues coordinate substrate: His-322, Asp-355, Glu-409, and His-414. Asp-355 is a binding site for Zn(2+). Position 414 (His-414) interacts with Zn(2+).

It belongs to the histidinol dehydrogenase family. Zn(2+) is required as a cofactor.

It carries out the reaction L-histidinol + 2 NAD(+) + H2O = L-histidine + 2 NADH + 3 H(+). The protein operates within amino-acid biosynthesis; L-histidine biosynthesis; L-histidine from 5-phospho-alpha-D-ribose 1-diphosphate: step 9/9. Catalyzes the sequential NAD-dependent oxidations of L-histidinol to L-histidinaldehyde and then to L-histidine. The protein is Histidinol dehydrogenase of Haemophilus influenzae (strain 86-028NP).